The sequence spans 153 residues: 3-hydroxyacyl-[acyl-carrier-protein] dehydratase FabZ (153 aa).

Residue H52 is part of the active site.

This sequence belongs to the thioester dehydratase family. FabZ subfamily.

It localises to the cytoplasm. It carries out the reaction a (3R)-hydroxyacyl-[ACP] = a (2E)-enoyl-[ACP] + H2O. Its function is as follows. Involved in unsaturated fatty acids biosynthesis. Catalyzes the dehydration of short chain beta-hydroxyacyl-ACPs and long chain saturated and unsaturated beta-hydroxyacyl-ACPs. The polypeptide is 3-hydroxyacyl-[acyl-carrier-protein] dehydratase FabZ (Magnetococcus marinus (strain ATCC BAA-1437 / JCM 17883 / MC-1)).